Reading from the N-terminus, the 298-residue chain is Protoheme IX farnesyltransferase (298 aa).

Helical transmembrane passes span 26 to 46 (VVSL…PGAV), 52 to 72 (LLGT…NCLV), 93 to 113 (VSVP…LFIL), 120 to 140 (LTMW…TVIL), 148 to 168 (IVIG…AITG), 174 to 194 (ALLL…ALAL), 219 to 239 (LHVL…YLTQ), 241 to 261 (SGLI…YYAI), and 278 to 298 (YSII…YFYF).

The protein belongs to the UbiA prenyltransferase family. Protoheme IX farnesyltransferase subfamily.

It is found in the cell inner membrane. The enzyme catalyses heme b + (2E,6E)-farnesyl diphosphate + H2O = Fe(II)-heme o + diphosphate. Its pathway is porphyrin-containing compound metabolism; heme O biosynthesis; heme O from protoheme: step 1/1. Its function is as follows. Converts heme B (protoheme IX) to heme O by substitution of the vinyl group on carbon 2 of heme B porphyrin ring with a hydroxyethyl farnesyl side group. The chain is Protoheme IX farnesyltransferase from Nitrosomonas eutropha (strain DSM 101675 / C91 / Nm57).